Reading from the N-terminus, the 79-residue chain is Small ribosomal subunit protein uS17 (79 aa).

This sequence belongs to the universal ribosomal protein uS17 family. Part of the 30S ribosomal subunit.

One of the primary rRNA binding proteins, it binds specifically to the 5'-end of 16S ribosomal RNA. This chain is Small ribosomal subunit protein uS17, found in Roseobacter denitrificans (strain ATCC 33942 / OCh 114) (Erythrobacter sp. (strain OCh 114)).